A 341-amino-acid chain; its full sequence is Phenylalanine--tRNA ligase alpha subunit (341 aa).

Glu254 lines the Mg(2+) pocket.

The protein belongs to the class-II aminoacyl-tRNA synthetase family. Phe-tRNA synthetase alpha subunit type 1 subfamily. Tetramer of two alpha and two beta subunits. Mg(2+) is required as a cofactor.

It is found in the cytoplasm. It carries out the reaction tRNA(Phe) + L-phenylalanine + ATP = L-phenylalanyl-tRNA(Phe) + AMP + diphosphate + H(+). The polypeptide is Phenylalanine--tRNA ligase alpha subunit (pheS) (Mycoplasma genitalium (strain ATCC 33530 / DSM 19775 / NCTC 10195 / G37) (Mycoplasmoides genitalium)).